The following is a 490-amino-acid chain: Serine/threonine-protein kinase BSK6 (490 aa).

Residue G2 is the site of N-myristoyl glycine attachment. Residue S25 is modified to Phosphoserine. The Protein kinase domain occupies 56 to 310; that stretch reads DNIVSEHGEK…KSLVTSLVTL (255 aa). ATP-binding positions include 62–70 and K84; that span reads HGEKAPNVV. D178 serves as the catalytic Proton acceptor. A Phosphoserine modification is found at S373.

This sequence belongs to the protein kinase superfamily. Ser/Thr protein kinase family. In terms of assembly, interacts with BRI1, ASK7/BIN2, ASK9/BIL2, BSK1, BSK5, BSK8 and BSK11. Post-translationally, phosphorylated by BRI1, ASK7/BIN2 and ASK9/BIL2.

Its subcellular location is the cell membrane. The catalysed reaction is L-seryl-[protein] + ATP = O-phospho-L-seryl-[protein] + ADP + H(+). The enzyme catalyses L-threonyl-[protein] + ATP = O-phospho-L-threonyl-[protein] + ADP + H(+). In terms of biological role, probable serine/threonine kinase that acts as a positive regulator of brassinosteroid (BR) signaling downstream of the receptor kinase BRI1. Functions redundantly with BSK3, BSK4, BSK7 and BSK8. This Arabidopsis thaliana (Mouse-ear cress) protein is Serine/threonine-protein kinase BSK6.